The primary structure comprises 321 residues: Putative membrane-bound redox modulator Alx (321 aa).

Residues 1–6 lie on the Periplasmic side of the membrane; sequence MNTVGT. Residues 7–27 traverse the membrane as a helical segment; sequence PLLWGGFAVVVAIMLAIDLLL. Over 28 to 43 the chain is Cytoplasmic; that stretch reads QGRRGAHAMTMKQAAA. Residues 44–64 form a helical membrane-spanning segment; that stretch reads WSLVWVTLSLLFNAAFWWYLV. Topologically, residues 65-89 are periplasmic; sequence QTEGRAVADPQALAFLTGYLIEKSL. A helical transmembrane segment spans residues 90–110; the sequence is AVDNVFVWLMLFSYFSVPAAL. The Cytoplasmic portion of the chain corresponds to 111–113; the sequence is QRR. The chain crosses the membrane as a helical span at residues 114 to 134; it reads VLVYGVLGAIVLRTIMIFTGS. Trp-135 is a topological domain (periplasmic). Residues 136–156 traverse the membrane as a helical segment; that stretch reads LISQFDWILYIFGAFLLFTGV. Topologically, residues 157-198 are cytoplasmic; the sequence is KMALAHEDESGIGDKPLVRWLRGHLRMTDTIDNEHFFVRKNG. The helical transmembrane segment at 199–219 threads the bilayer; that stretch reads LLYATPLMLVLILVELSDVIF. Residues 220–225 lie on the Periplasmic side of the membrane; sequence AVDSIP. The helical transmembrane segment at 226–246 threads the bilayer; sequence AIFAVTTDPFIVLTSNLFAIL. The Cytoplasmic portion of the chain corresponds to 247-261; it reads GLRAMYFLLAGVAER. The chain crosses the membrane as a helical span at residues 262 to 282; it reads FSMLKYGLAVILVFIGIKMLI. At 283-286 the chain is on the periplasmic side; sequence VDFY. The helical transmembrane segment at 287–307 threads the bilayer; sequence HIPIAVSLGVVFGILVMTFII. The Cytoplasmic portion of the chain corresponds to 308-321; the sequence is NAWVNYRHDKQRGG.

Belongs to the TerC family.

The protein localises to the cell inner membrane. Functionally, has been proposed to be a redox modulator. This is Putative membrane-bound redox modulator Alx from Escherichia coli (strain K12).